Reading from the N-terminus, the 92-residue chain is SPbeta prophage-derived uncharacterized protein YopY (92 aa).

The chain is SPbeta prophage-derived uncharacterized protein YopY (yopY) from Bacillus subtilis (strain 168).